Consider the following 1501-residue polypeptide: Protein SNQ2 (1501 aa).

Over residues 1 to 17 (MSNIKSTQDSSHNAVAR) the composition is skewed to polar residues. Residues 1–56 (MSNIKSTQDSSHNAVARSSSASFAASEESFTGITHDKDEQSDTPADKLTKMLTGPA) form a disordered region. N-acetylserine is present on Ser2. Residues 18-30 (SSSASFAASEESF) show a composition bias toward low complexity. Phosphoserine is present on residues Ser26 and Ser29. A compositionally biased stretch (basic and acidic residues) spans 34–49 (THDKDEQSDTPADKLT). Ser64, Ser80, and Ser86 each carry phosphoserine. One can recognise an ABC transporter 1 domain in the interval 161–410 (FKGIKAKRHQ…FAKMGYLCPP (250 aa)). Residues Asn273, Asn334, and Asn518 are each glycosylated (N-linked (GlcNAc...) asparagine). The next 5 helical transmembrane spans lie at 521–541 (YTVI…SLFY), 554–574 (GGVL…NISF), 600–620 (LASF…LFFL), 628–648 (GSFF…NGLF), and 664–680 (ISGI…TYMI). Asn730 is a glycosylation site (N-linked (GlcNAc...) asparagine). A helical membrane pass occupies residues 771–789 (FGILWCFLLGYVVLKVIFT). The ABC transporter 2 domain maps to 853–1095 (FIWKDVCFTI…ILNYFERNGA (243 aa)). A glycan (N-linked (GlcNAc...) asparagine) is linked at Asn874. 889 to 896 (GESGAGKT) contacts ATP. Thr1153 carries the post-translational modification Phosphothreonine. The next 4 helical transmembrane spans lie at 1190 to 1212 (IMSK…FNVG), 1216 to 1236 (VGLQ…APAM), 1277 to 1296 (HLFF…RIFF), and 1333 to 1352 (ANVI…GVTQ). An N-linked (GlcNAc...) asparagine glycan is attached at Asn1401. A helical transmembrane segment spans residues 1455–1475 (FGIFWIYIFFNIIAMVCVYYL).

This sequence belongs to the ABC transporter superfamily. ABCG family. PDR (TC 3.A.1.205) subfamily.

Its subcellular location is the membrane. Could be an ATP-dependent permease. Confers hyper-resistance to the mutagens 4-nitroquinoline-N-oxide (4-NQO) and triaziquone, as well as to the chemicals sulphomethuron methyl phenanthroline when present in multiple copies. Exhibits nucleoside triphosphatase activity. This Saccharomyces cerevisiae (strain ATCC 204508 / S288c) (Baker's yeast) protein is Protein SNQ2 (SNQ2).